We begin with the raw amino-acid sequence, 608 residues long: UvrABC system protein C (608 aa).

The GIY-YIG domain maps to 15–93 (HQPGVYRMYN…IKQYLPKYNV (79 aa)). The UVR domain maps to 203–238 (RQVIQSLVEQMEGASQALNFEKAATIRDQIQSMRRV).

It belongs to the UvrC family. Interacts with UvrB in an incision complex.

The protein localises to the cytoplasm. The UvrABC repair system catalyzes the recognition and processing of DNA lesions. UvrC both incises the 5' and 3' sides of the lesion. The N-terminal half is responsible for the 3' incision and the C-terminal half is responsible for the 5' incision. The polypeptide is UvrABC system protein C (Aliivibrio salmonicida (strain LFI1238) (Vibrio salmonicida (strain LFI1238))).